A 386-amino-acid chain; its full sequence is UDP-N-acetylbacillosamine transaminase (386 aa).

Substrate-binding positions include 25–28, Ala-56, and Ser-179; that span reads NYIA. Lys-184 carries the N6-(pyridoxal phosphate)lysine modification. Substrate is bound by residues Asn-227 and 325–328; that span reads QIET.

It belongs to the DegT/DnrJ/EryC1 family. Requires pyridoxal 5'-phosphate as cofactor.

The catalysed reaction is UDP-N-acetylbacillosamine + 2-oxoglutarate = UDP-2-acetamido-2,6-dideoxy-alpha-D-xylo-hex-4-ulose + L-glutamate. It functions in the pathway protein modification; protein glycosylation. Functionally, aminotransferase involved in the bacillosamine biosynthesis pathway by producing UDP-4-amino-4,6-dideoxy-alpha-D-GlcNAc (UDP-2-acetamido-4-amino-2,4,6-trideoxy-alpha-D-glucopyranose), a precursor used in the production of the glycan component 2,4-diacetamido-2,4,6-trideoxy-alpha-D-glucopyranose. Required for host colonization and virulence. Involved in the N-linked protein glycosylation pathway. The polypeptide is UDP-N-acetylbacillosamine transaminase (pglE) (Campylobacter jejuni subsp. jejuni serotype O:2 (strain ATCC 700819 / NCTC 11168)).